The primary structure comprises 53 residues: MAKETREIIYLFSSTGNGHFYTTTKNKRSHPEKIKLKKFDPIIKKHITYTEKK.

Belongs to the bacterial ribosomal protein bL33 family.

The chain is Large ribosomal subunit protein bL33 from Blochmanniella floridana.